A 264-amino-acid polypeptide reads, in one-letter code: Phycocyanobilin:ferredoxin oxidoreductase (264 aa).

The protein belongs to the HY2 family.

The catalysed reaction is (2R,3Z)-phycocyanobilin + 4 oxidized [2Fe-2S]-[ferredoxin] = biliverdin IXalpha + 4 reduced [2Fe-2S]-[ferredoxin] + 4 H(+). In terms of biological role, catalyzes the four-electron reduction of biliverdin IX-alpha (2-electron reduction at both the A and D rings); the reaction proceeds via an isolatable 2-electron intermediate, 181,182-dihydrobiliverdin. This is Phycocyanobilin:ferredoxin oxidoreductase (pcyA) from Prochlorococcus marinus (strain MIT 9313).